Reading from the N-terminus, the 184-residue chain is Protein DMP2 (184 aa).

4 consecutive transmembrane segments (helical) span residues 19–39, 45–65, 105–125, and 142–162; these read LIKL…PVLT, LLIN…SCCF, VGDF…SLLD, and IFLM…FTVF.

This sequence belongs to the plant DMP1 protein family. In terms of tissue distribution, expressed constitutively in leaves, stems, flowers, siliques and roots.

It localises to the endoplasmic reticulum membrane. The protein localises to the vacuole membrane. Its function is as follows. Involved in membrane remodeling. The sequence is that of Protein DMP2 from Arabidopsis thaliana (Mouse-ear cress).